Reading from the N-terminus, the 216-residue chain is Small ribosomal subunit protein uS3c (216 aa).

In terms of domain architecture, KH type-2 spans 43–118 (INNYVKKNMR…KLNITITRIE (76 aa)).

Belongs to the universal ribosomal protein uS3 family. As to quaternary structure, part of the 30S ribosomal subunit.

It localises to the plastid. The sequence is that of Small ribosomal subunit protein uS3c (rps3) from Cuscuta reflexa (Southern Asian dodder).